The following is a 463-amino-acid chain: Fumarate hydratase class II (463 aa).

Substrate is bound by residues 97–99 (SGT), Arg125, 128–131 (HPND), 138–140 (SSN), and Thr186. Positions 121–134 (RGEGRKVHPNDHVN) are enriched in basic and acidic residues. The disordered stretch occupies residues 121 to 142 (RGEGRKVHPNDHVNRGQSSNDT). The active-site Proton donor/acceptor is His187. The active site involves Ser317. Substrate is bound by residues Ser318 and 323–325 (KVN).

Belongs to the class-II fumarase/aspartase family. Fumarase subfamily. In terms of assembly, homotetramer.

It is found in the cytoplasm. The enzyme catalyses (S)-malate = fumarate + H2O. It participates in carbohydrate metabolism; tricarboxylic acid cycle; (S)-malate from fumarate: step 1/1. In terms of biological role, involved in the TCA cycle. Catalyzes the stereospecific interconversion of fumarate to L-malate. The polypeptide is Fumarate hydratase class II (Bordetella bronchiseptica (strain ATCC BAA-588 / NCTC 13252 / RB50) (Alcaligenes bronchisepticus)).